A 337-amino-acid chain; its full sequence is MRPVILDVEGYELDSEEKEILAHPLVAGIILFTRNYYDIEQLKALVKDIRRYAGNELLIAVDHEGGRVQRFRDDFTRLPSAGSLIEKNDMKTACELAFSSAWVMASELIACDIDFSFAPVLDLNGISNVIQNRAFSSSITETVTLAEAYINGMKSAGMVSTGKHFPGHGSVEADSHTALPVDSRSELEIFTKDIKPFENLIKKGALDAVMPSHVVYSQCDLQPAGFSSYWLDDVLRTRLGFKGVVISDDLSMHGASFVGNHLSRAESAIQAGCDLILACNDRSGAVSILDNLKVKPTAQYHAVNQLRSTKNKFILPLNKNPIWIKNKQMLMQLSEQF.

Residues aspartate 62, arginine 70, arginine 133, and 163-164 contribute to the substrate site; that span reads KH. The active-site Proton donor/acceptor is histidine 176. Aspartate 248 functions as the Nucleophile in the catalytic mechanism.

This sequence belongs to the glycosyl hydrolase 3 family. NagZ subfamily.

Its subcellular location is the cytoplasm. The enzyme catalyses Hydrolysis of terminal non-reducing N-acetyl-D-hexosamine residues in N-acetyl-beta-D-hexosaminides.. It participates in cell wall biogenesis; peptidoglycan recycling. In terms of biological role, plays a role in peptidoglycan recycling by cleaving the terminal beta-1,4-linked N-acetylglucosamine (GlcNAc) from peptide-linked peptidoglycan fragments, giving rise to free GlcNAc, anhydro-N-acetylmuramic acid and anhydro-N-acetylmuramic acid-linked peptides. The protein is Beta-hexosaminidase of Psychromonas ingrahamii (strain DSM 17664 / CCUG 51855 / 37).